The chain runs to 55 residues: UPF0291 protein CA_C2726 (55 aa).

This sequence belongs to the UPF0291 family.

The protein localises to the cytoplasm. The sequence is that of UPF0291 protein CA_C2726 from Clostridium acetobutylicum (strain ATCC 824 / DSM 792 / JCM 1419 / IAM 19013 / LMG 5710 / NBRC 13948 / NRRL B-527 / VKM B-1787 / 2291 / W).